A 217-amino-acid polypeptide reads, in one-letter code: Adenosylcobinamide-GDP ribazoletransferase (217 aa).

A run of 5 helical transmembrane segments spans residues 6–26, 39–61, 95–115, 116–136, and 162–182; these read ALLS…FKCA, GPAA…LLLM, GTGG…STAS, PLQL…VAAF, and ALAV…AVAL.

The protein belongs to the CobS family. Mg(2+) is required as a cofactor.

The protein localises to the cell membrane. It carries out the reaction alpha-ribazole + adenosylcob(III)inamide-GDP = adenosylcob(III)alamin + GMP + H(+). It catalyses the reaction alpha-ribazole 5'-phosphate + adenosylcob(III)inamide-GDP = adenosylcob(III)alamin 5'-phosphate + GMP + H(+). The protein operates within cofactor biosynthesis; adenosylcobalamin biosynthesis; adenosylcobalamin from cob(II)yrinate a,c-diamide: step 7/7. Its function is as follows. Joins adenosylcobinamide-GDP and alpha-ribazole to generate adenosylcobalamin (Ado-cobalamin). Also synthesizes adenosylcobalamin 5'-phosphate from adenosylcobinamide-GDP and alpha-ribazole 5'-phosphate. The protein is Adenosylcobinamide-GDP ribazoletransferase of Pyrobaculum calidifontis (strain DSM 21063 / JCM 11548 / VA1).